Here is a 333-residue protein sequence, read N- to C-terminus: Nucleoid-associated protein PSPTO_1265 (333 aa).

This sequence belongs to the YejK family.

The protein localises to the cytoplasm. The protein resides in the nucleoid. The protein is Nucleoid-associated protein PSPTO_1265 of Pseudomonas syringae pv. tomato (strain ATCC BAA-871 / DC3000).